We begin with the raw amino-acid sequence, 102 residues long: MKKVLALVVAAAMGLSSAAFAAETATTPAPTATTTKAAPAKTTHHKKQHKAAPAQKAQAAKKHHKNAKAEQKAPEQKAQAAKKHARKHSHQQPAKPAAQPAA.

An N-terminal signal peptide occupies residues 1-21 (MKKVLALVVAAAMGLSSAAFA). The segment covering 22–41 (AETATTPAPTATTTKAAPAK) has biased composition (low complexity). A propeptide spanning residues 22–58 (AETATTPAPTATTTKAAPAKTTHHKKQHKAAPAQKAQ) is cleaved from the precursor. Residues 22–102 (AETATTPAPT…PAKPAAQPAA (81 aa)) are disordered. Over residues 80–90 (AAKKHARKHSH) the composition is skewed to basic residues. Low complexity predominate over residues 91–102 (QQPAKPAAQPAA).

This sequence belongs to the Asr family. In terms of processing, proteolytic processing gives rise to the active protein.

Its subcellular location is the periplasm. Functionally, required for growth and/or survival at acidic conditions. This is Acid shock protein from Escherichia coli O127:H6 (strain E2348/69 / EPEC).